Here is a 431-residue protein sequence, read N- to C-terminus: Histidinol dehydrogenase (431 aa).

NAD(+) contacts are provided by Tyr-130, Gln-191, and Asn-214. The substrate site is built by Ser-237, Gln-259, and His-262. 2 residues coordinate Zn(2+): Gln-259 and His-262. Residues Glu-327 and His-328 each act as proton acceptor in the active site. Substrate is bound by residues His-328, Asp-361, Glu-415, and His-420. Position 361 (Asp-361) interacts with Zn(2+). His-420 is a binding site for Zn(2+).

It belongs to the histidinol dehydrogenase family. Requires Zn(2+) as cofactor.

It catalyses the reaction L-histidinol + 2 NAD(+) + H2O = L-histidine + 2 NADH + 3 H(+). Its pathway is amino-acid biosynthesis; L-histidine biosynthesis; L-histidine from 5-phospho-alpha-D-ribose 1-diphosphate: step 9/9. Functionally, catalyzes the sequential NAD-dependent oxidations of L-histidinol to L-histidinaldehyde and then to L-histidine. The chain is Histidinol dehydrogenase from Rhodopseudomonas palustris (strain ATCC BAA-98 / CGA009).